A 93-amino-acid polypeptide reads, in one-letter code: DNA-directed RNA polymerase subunit Rpo11 (93 aa).

It belongs to the archaeal Rpo11/eukaryotic RPB11/RPC19 RNA polymerase subunit family. As to quaternary structure, part of the RNA polymerase complex.

The protein localises to the cytoplasm. The catalysed reaction is RNA(n) + a ribonucleoside 5'-triphosphate = RNA(n+1) + diphosphate. In terms of biological role, DNA-dependent RNA polymerase (RNAP) catalyzes the transcription of DNA into RNA using the four ribonucleoside triphosphates as substrates. This is DNA-directed RNA polymerase subunit Rpo11 from Sulfurisphaera tokodaii (strain DSM 16993 / JCM 10545 / NBRC 100140 / 7) (Sulfolobus tokodaii).